A 457-amino-acid polypeptide reads, in one-letter code: MQKYFVEARQLLALAIPVILAQVAQTAMGFVDTVMAGGYSATDMAAVAIGTSIWLPAILFGHGLLLALTPVVAQLNGSGRRERIAPQVRQGFWLAGFVSVLIMVVLWNAGYIISSMHNIDPLLAEKAVGYLRALLWGAPGYLFFQVARNQCEGLAKTKPGMVMGFIGLLVNIPVNYIFIYGHFGMPELGGVGCGVATASVYWVMFASMLWWVRRARTMRDIRCAERFSGPDFAVLLRLVQLGLPIALALFFEVTLFAVVALLVSPLGIIDVAGHQIALNFSSLMFVLPLSLAAAVTIRVGFRLGQGSTIDAQVSARTGVGVGVCLAVFTAIFTVLMRKQIALLYNDNPEVVTLASHLMLLAAIYQISDSIQVIGSGILRGYKDTRSIFFITFTAYWVLGLPSGYLLALTDMIVPRMGPAGFWCGFIIGLTSAAIMMMLRMRFLQRQPSSIILQRAAR.

12 consecutive transmembrane segments (helical) span residues 11–31, 53–73, 93–113, 127–147, 160–180, 191–211, 243–263, 276–296, 316–336, 357–377, 387–407, and 418–438; these read LLAL…MGFV, IWLP…PVVA, WLAG…GYII, AVGY…FQVA, GMVM…IFIY, VGCG…MLWW, LPIA…ALLV, IALN…AAVT, RTGV…TVLM, LMLL…GSGI, IFFI…YLLA, and PAGF…MMML.

It belongs to the multi antimicrobial extrusion (MATE) (TC 2.A.66.1) family. MdtK subfamily.

The protein localises to the cell inner membrane. Its function is as follows. Multidrug efflux pump that functions probably as a Na(+)/drug antiporter. This Klebsiella pneumoniae subsp. pneumoniae (strain ATCC 700721 / MGH 78578) protein is Multidrug resistance protein MdtK.